Here is a 189-residue protein sequence, read N- to C-terminus: Threonylcarbamoyl-AMP synthase (189 aa).

The 184-residue stretch at 6–189 folds into the YrdC-like domain; the sequence is SPAFESVLTA…ALTGELYRQG (184 aa).

Belongs to the SUA5 family. TsaC subfamily.

The protein localises to the cytoplasm. It carries out the reaction L-threonine + hydrogencarbonate + ATP = L-threonylcarbamoyladenylate + diphosphate + H2O. Required for the formation of a threonylcarbamoyl group on adenosine at position 37 (t(6)A37) in tRNAs that read codons beginning with adenine. Catalyzes the conversion of L-threonine, HCO(3)(-)/CO(2) and ATP to give threonylcarbamoyl-AMP (TC-AMP) as the acyladenylate intermediate, with the release of diphosphate. In Photorhabdus laumondii subsp. laumondii (strain DSM 15139 / CIP 105565 / TT01) (Photorhabdus luminescens subsp. laumondii), this protein is Threonylcarbamoyl-AMP synthase.